Reading from the N-terminus, the 142-residue chain is Small ribosomal subunit protein uS9c (142 aa).

It belongs to the universal ribosomal protein uS9 family.

The protein resides in the plastid. It localises to the chloroplast. The protein is Small ribosomal subunit protein uS9c (rps9) of Stigeoclonium helveticum (Green alga).